Here is a 279-residue protein sequence, read N- to C-terminus: Putative potassium channel regulatory protein (279 aa).

In terms of domain architecture, BTB spans 5–74 (ELVTLNVGGM…VRTSQLSLPS (70 aa)). The tract at residues 256–279 (ENSRQENYETETVQVKQAKPNKKR) is disordered.

It is found in the endoplasmic reticulum. Inhibits potassium fluxes in cells, possibly by retaining potassium channels in the cytoplasm. The protein is Putative potassium channel regulatory protein (kcnrg) of Xenopus tropicalis (Western clawed frog).